The chain runs to 117 residues: Large ribosomal subunit protein bL20 (117 aa).

Belongs to the bacterial ribosomal protein bL20 family.

Its function is as follows. Binds directly to 23S ribosomal RNA and is necessary for the in vitro assembly process of the 50S ribosomal subunit. It is not involved in the protein synthesizing functions of that subunit. This chain is Large ribosomal subunit protein bL20, found in Vibrio campbellii (strain ATCC BAA-1116).